A 221-amino-acid chain; its full sequence is Serotriflin (221 aa).

Residues 19–147 form the SCP domain; it reads LDKHNALRRS…SYNYYYVCHY (129 aa). The N-linked (GlcNAc...) asparagine glycan is linked to Asn-48. Cystine bridges form between Cys-56-Cys-134, Cys-73-Cys-148, Cys-129-Cys-145, Cys-167-Cys-174, Cys-170-Cys-179, Cys-183-Cys-216, Cys-192-Cys-210, and Cys-201-Cys-214. Residues 183–216 form the ShKT domain; sequence CKHVDRYSNCNSLVQQISCQSNNMNTDCPASCFC.

In terms of assembly, forms a stable, non-covalent complex with SSP-2.

The protein resides in the secreted. In Protobothrops flavoviridis (Habu), this protein is Serotriflin.